Reading from the N-terminus, the 320-residue chain is Acetyl-coenzyme A carboxylase carboxyl transferase subunit alpha (320 aa).

The CoA carboxyltransferase C-terminal domain occupies 42 to 295; it reads IEEKALAALT…GDAIAKSFAD (254 aa).

It belongs to the AccA family. Acetyl-CoA carboxylase is a heterohexamer composed of biotin carboxyl carrier protein (AccB), biotin carboxylase (AccC) and two subunits each of ACCase subunit alpha (AccA) and ACCase subunit beta (AccD).

The protein localises to the cytoplasm. It catalyses the reaction N(6)-carboxybiotinyl-L-lysyl-[protein] + acetyl-CoA = N(6)-biotinyl-L-lysyl-[protein] + malonyl-CoA. It participates in lipid metabolism; malonyl-CoA biosynthesis; malonyl-CoA from acetyl-CoA: step 1/1. Functionally, component of the acetyl coenzyme A carboxylase (ACC) complex. First, biotin carboxylase catalyzes the carboxylation of biotin on its carrier protein (BCCP) and then the CO(2) group is transferred by the carboxyltransferase to acetyl-CoA to form malonyl-CoA. The chain is Acetyl-coenzyme A carboxylase carboxyl transferase subunit alpha from Rhodopseudomonas palustris (strain BisA53).